Consider the following 407-residue polypeptide: CCA-adding enzyme (407 aa).

Residues G32 and R35 each contribute to the ATP site. CTP is bound by residues G32 and R35. The Mg(2+) site is built by D45 and D47. Residues R116, D159, R162, R165, and R168 each coordinate ATP. R116, D159, R162, R165, and R168 together coordinate CTP.

This sequence belongs to the tRNA nucleotidyltransferase/poly(A) polymerase family. Bacterial CCA-adding enzyme type 3 subfamily. Homodimer. Requires Mg(2+) as cofactor.

The enzyme catalyses a tRNA precursor + 2 CTP + ATP = a tRNA with a 3' CCA end + 3 diphosphate. The catalysed reaction is a tRNA with a 3' CCA end + 2 CTP + ATP = a tRNA with a 3' CCACCA end + 3 diphosphate. Catalyzes the addition and repair of the essential 3'-terminal CCA sequence in tRNAs without using a nucleic acid template. Adds these three nucleotides in the order of C, C, and A to the tRNA nucleotide-73, using CTP and ATP as substrates and producing inorganic pyrophosphate. tRNA 3'-terminal CCA addition is required both for tRNA processing and repair. Also involved in tRNA surveillance by mediating tandem CCA addition to generate a CCACCA at the 3' terminus of unstable tRNAs. While stable tRNAs receive only 3'-terminal CCA, unstable tRNAs are marked with CCACCA and rapidly degraded. The sequence is that of CCA-adding enzyme from Lactiplantibacillus plantarum (strain ATCC BAA-793 / NCIMB 8826 / WCFS1) (Lactobacillus plantarum).